Here is a 214-residue protein sequence, read N- to C-terminus: Adenylate kinase (214 aa).

Gly-10–Thr-15 provides a ligand contact to ATP. The interval Ser-30–Val-59 is NMP. Residues Thr-31, Arg-36, Gln-57–Val-59, Gly-85–Arg-88, and Gln-92 each bind AMP. Residues Gly-122–Asp-159 form an LID region. Residues Arg-123 and Val-132–Tyr-133 each bind ATP. Residues Arg-156 and Arg-167 each contribute to the AMP site. ATP is bound at residue Gln-200.

The protein belongs to the adenylate kinase family. In terms of assembly, monomer.

The protein resides in the cytoplasm. It carries out the reaction AMP + ATP = 2 ADP. It functions in the pathway purine metabolism; AMP biosynthesis via salvage pathway; AMP from ADP: step 1/1. In terms of biological role, catalyzes the reversible transfer of the terminal phosphate group between ATP and AMP. Plays an important role in cellular energy homeostasis and in adenine nucleotide metabolism. The chain is Adenylate kinase from Shewanella putrefaciens (strain CN-32 / ATCC BAA-453).